The sequence spans 193 residues: Acyl carrier protein phosphodiesterase (193 aa).

It belongs to the AcpH family.

It catalyses the reaction holo-[ACP] + H2O = apo-[ACP] + (R)-4'-phosphopantetheine + H(+). Functionally, converts holo-ACP to apo-ACP by hydrolytic cleavage of the phosphopantetheine prosthetic group from ACP. This chain is Acyl carrier protein phosphodiesterase, found in Klebsiella pneumoniae subsp. pneumoniae (strain ATCC 700721 / MGH 78578).